The sequence spans 957 residues: MFSQLDFTGLPLANTGENRPLAIAVAMSNFVKKTLQKQADLRDDWQRKLPTLADCGNYAERLTIYLSTINDEVQLSHCLRNFRHREMARLSFIQSNKLATVEFVFEQLSDLAEAIILAARDWLFTRCCAEYGTPVNGLGEIQPLLIIGMGKLGGRELNFSSDIDLIFTYPEAGQTVGGHKTIENSKFFTRLGQRLIKALDEITVDGFVYRTDMRLRPFGDNGALVLSFAAMEDYYQEQGRDWERYAMIKAKILGEDLTDVNHRYLQQMLRPFVYRRYLDFSAIQSLREMKQKISREVLRRNLQDNIKLGAGGIREIEFIVQTFQMIRGGRDKILQQRSLLQVLPHLVTLNLLTKQQAKHLGDAYIFHRQLENVLQAIDDQQTQSLPADAKNQARIMYACQSYWQKDQQNQPLMIEYHWQSWQQFLSTLAQHQQHVRVIFNQLIGEEEQANQSPVNEQLAIWQDILHPEIRQLELAEVLRDYPVATEDYATIFHLLANTLQDWSKRPIGVRGRKVLSQLMPKVMHSICSKTDYLVVLPRLLNIIDRVTTRTTYLELLQEKDQILPLLERLCGHSIMVAEQIARYPMLLDEFIINKSLMKVIEFEQYKTELTEYLIRIPEEDEEALIDALRQFKQGHLLRIAVADILGVLPVMKISDHLTYLAAAIISEVVNMAWKSLVKRFGKPTHLAEDERGFAVIAYGKLGGLELGYNSDLDLVFLHNAPLEGETSGRRSISNHQFYLKLAQKINSIFNLNTSAGVLYEVDMRLRPSGDAGLLVSTFQAYQYYQQHEAWTWETQALVRGRCVYGSASLIDEFSRIRRTTLCLARTRGRLRQEISQMRHKMYQHLTKTSTGQFNLKTDQGGITDIEFIAQSIVLEYAHCYPEMAKWSDNVRIFTAAIECGILSQHIGEGLKNAYTRIRNRIHQLNLLQLPSIVNDTEFVSERAFVTKIWQQIFTDNE.

The interval 1–447 (MFSQLDFTGL…IFNQLIGEEE (447 aa)) is adenylyl removase. The tract at residues 454 to 957 (VNEQLAIWQD…IWQQIFTDNE (504 aa)) is adenylyl transferase.

It belongs to the GlnE family. Mg(2+) serves as cofactor.

The enzyme catalyses [glutamine synthetase]-O(4)-(5'-adenylyl)-L-tyrosine + phosphate = [glutamine synthetase]-L-tyrosine + ADP. The catalysed reaction is [glutamine synthetase]-L-tyrosine + ATP = [glutamine synthetase]-O(4)-(5'-adenylyl)-L-tyrosine + diphosphate. Involved in the regulation of glutamine synthetase GlnA, a key enzyme in the process to assimilate ammonia. When cellular nitrogen levels are high, the C-terminal adenylyl transferase (AT) inactivates GlnA by covalent transfer of an adenylyl group from ATP to specific tyrosine residue of GlnA, thus reducing its activity. Conversely, when nitrogen levels are low, the N-terminal adenylyl removase (AR) activates GlnA by removing the adenylyl group by phosphorolysis, increasing its activity. The regulatory region of GlnE binds the signal transduction protein PII (GlnB) which indicates the nitrogen status of the cell. The polypeptide is Bifunctional glutamine synthetase adenylyltransferase/adenylyl-removing enzyme (Haemophilus ducreyi (strain 35000HP / ATCC 700724)).